The primary structure comprises 345 residues: Histidinol-phosphate aminotransferase (345 aa).

At Lys-205 the chain carries N6-(pyridoxal phosphate)lysine.

Belongs to the class-II pyridoxal-phosphate-dependent aminotransferase family. Histidinol-phosphate aminotransferase subfamily. In terms of assembly, homodimer. The cofactor is pyridoxal 5'-phosphate.

The enzyme catalyses L-histidinol phosphate + 2-oxoglutarate = 3-(imidazol-4-yl)-2-oxopropyl phosphate + L-glutamate. It functions in the pathway amino-acid biosynthesis; L-histidine biosynthesis; L-histidine from 5-phospho-alpha-D-ribose 1-diphosphate: step 7/9. The chain is Histidinol-phosphate aminotransferase from Parabacteroides distasonis (strain ATCC 8503 / DSM 20701 / CIP 104284 / JCM 5825 / NCTC 11152).